A 418-amino-acid chain; its full sequence is Metacaspase-4 (418 aa).

Residues His86 and Cys139 contribute to the active site. Cys139 bears the S-nitrosocysteine mark. A disordered region spans residues 153-172 (GESTKKEAEDEDESEESSSR).

This sequence belongs to the peptidase C14B family. The two subunits are derived from the precursor sequence by an autocatalytic mechanism. As to expression, expressed in roots, cotyledons, leaves, cauline leaves, pollen and embryos.

The protein localises to the cytoplasm. It is found in the cytosol. Its activity is regulated as follows. Activated by Ca(2+) which induces self-processing and accelerates the rate of the enzyme activity, but has no effect on Km. Functionally, cysteine protease that cleaves specifically after arginine or lysine residues. Does not cleave caspase-specific substrates. Plays a positive regulatory role in biotic and abiotic stress-induced programmed cell death. The chain is Metacaspase-4 (AMC4) from Arabidopsis thaliana (Mouse-ear cress).